Here is a 452-residue protein sequence, read N- to C-terminus: Probable dihydrolipoyllysine-residue succinyltransferase component of 2-oxoglutarate dehydrogenase complex, mitochondrial (452 aa).

In terms of domain architecture, Lipoyl-binding spans 42–117 (STRIKTPPFP…TIDQDIAVID (76 aa)). An N6-lipoyllysine modification is found at K83. A disordered region spans residues 119–225 (SAAPPEGGSA…FSRNEDRVKM (107 aa)). 3 stretches are compositionally biased toward basic and acidic residues: residues 130–144 (PKKD…DAAK), 154–170 (KPIE…EQKE), and 195–209 (AKSE…KATE). Catalysis depends on residues H424 and D428.

It belongs to the 2-oxoacid dehydrogenase family. (R)-lipoate is required as a cofactor.

The protein resides in the mitochondrion. The catalysed reaction is N(6)-[(R)-dihydrolipoyl]-L-lysyl-[protein] + succinyl-CoA = N(6)-[(R)-S(8)-succinyldihydrolipoyl]-L-lysyl-[protein] + CoA. It participates in amino-acid degradation; L-lysine degradation via saccharopine pathway; glutaryl-CoA from L-lysine: step 6/6. The 2-oxoglutarate dehydrogenase complex catalyzes the overall conversion of 2-oxoglutarate to succinyl-CoA and CO(2). It contains multiple copies of three enzymatic components: 2-oxoglutarate dehydrogenase (E1), dihydrolipoamide succinyltransferase (E2) and lipoamide dehydrogenase (E3). The sequence is that of Probable dihydrolipoyllysine-residue succinyltransferase component of 2-oxoglutarate dehydrogenase complex, mitochondrial (kgd2) from Schizosaccharomyces pombe (strain 972 / ATCC 24843) (Fission yeast).